A 129-amino-acid polypeptide reads, in one-letter code: D-ribose pyranase (129 aa).

The Proton donor role is filled by histidine 20. Substrate is bound by residues aspartate 28, histidine 96, and 118–120 (YAN).

It belongs to the RbsD / FucU family. RbsD subfamily. In terms of assembly, homodecamer.

It is found in the cytoplasm. It carries out the reaction beta-D-ribopyranose = beta-D-ribofuranose. It functions in the pathway carbohydrate metabolism; D-ribose degradation; D-ribose 5-phosphate from beta-D-ribopyranose: step 1/2. Functionally, catalyzes the interconversion of beta-pyran and beta-furan forms of D-ribose. The chain is D-ribose pyranase from Shouchella clausii (strain KSM-K16) (Alkalihalobacillus clausii).